The sequence spans 192 residues: Fe/S biogenesis protein NfuA (192 aa).

[4Fe-4S] cluster is bound by residues Cys-149 and Cys-152.

The protein belongs to the NfuA family. As to quaternary structure, homodimer. The cofactor is [4Fe-4S] cluster.

Its function is as follows. Involved in iron-sulfur cluster biogenesis. Binds a 4Fe-4S cluster, can transfer this cluster to apoproteins, and thereby intervenes in the maturation of Fe/S proteins. Could also act as a scaffold/chaperone for damaged Fe/S proteins. The protein is Fe/S biogenesis protein NfuA of Alteromonas mediterranea (strain DSM 17117 / CIP 110805 / LMG 28347 / Deep ecotype).